The following is a 372-amino-acid chain: Putative glutamate--cysteine ligase 2 (372 aa).

The protein belongs to the glutamate--cysteine ligase type 2 family. YbdK subfamily. As to quaternary structure, homodimer.

The enzyme catalyses L-cysteine + L-glutamate + ATP = gamma-L-glutamyl-L-cysteine + ADP + phosphate + H(+). In terms of biological role, ATP-dependent carboxylate-amine ligase which exhibits weak glutamate--cysteine ligase activity. The polypeptide is Putative glutamate--cysteine ligase 2 (ybdK) (Escherichia coli (strain K12 / MC4100 / BW2952)).